Here is a 391-residue protein sequence, read N- to C-terminus: Processive diacylglycerol beta-glucosyltransferase (391 aa).

It belongs to the glycosyltransferase 28 family. UgtP subfamily.

The protein resides in the cell membrane. The enzyme catalyses a 1,2-diacyl-3-O-(beta-D-glucopyranosyl)-sn-glycerol + UDP-alpha-D-glucose = a 1,2-diacyl-3-O-(beta-D-Glc-(1-&gt;6)-beta-D-Glc)-sn-glycerol + UDP + H(+). It carries out the reaction a 1,2-diacyl-sn-glycerol + UDP-alpha-D-glucose = a 1,2-diacyl-3-O-(beta-D-glucopyranosyl)-sn-glycerol + UDP + H(+). It participates in glycolipid metabolism; diglucosyl-diacylglycerol biosynthesis. In terms of biological role, processive glucosyltransferase involved in the biosynthesis of both the bilayer- and non-bilayer-forming membrane glucolipids. Is able to successively transfer two glucosyl residues to diacylglycerol (DAG), thereby catalyzing the formation of beta-monoglucosyl-DAG (3-O-(beta-D-glucopyranosyl)-1,2-diacyl-sn-glycerol) and beta-diglucosyl-DAG (3-O-(beta-D-glucopyranosyl-beta-(1-&gt;6)-D-glucopyranosyl)-1,2-diacyl-sn-glycerol). Beta-diglucosyl-DAG is the predominant glycolipid found in Bacillales and is also used as a membrane anchor for lipoteichoic acid (LTA). This chain is Processive diacylglycerol beta-glucosyltransferase, found in Staphylococcus aureus (strain MRSA252).